Here is a 665-residue protein sequence, read N- to C-terminus: Dual specificity protein phosphatase 16 (665 aa).

One can recognise a Rhodanese domain in the interval 22–137 (GTEKVLLIDS…FSRCFPGLCE (116 aa)). Lys-55 is modified ((Microbial infection) N6-acetyllysine; by EIS). In terms of domain architecture, Tyrosine-protein phosphatase spans 158–300 (GPTRILPNLY…LLDYEKKIKN (143 aa)). Cys-244 acts as the Phosphocysteine intermediate in catalysis. Positions 321–368 (EPVPAVSEGGQKSETPLSPPCADSATSEAAGQRPVHPASVPSVPSVQP) are disordered. Over residues 354-368 (PVHPASVPSVPSVQP) the composition is skewed to low complexity. Ser-446 carries the post-translational modification Phosphoserine; by MAPK1. 2 stretches are compositionally biased toward polar residues: residues 449 to 458 (QELSEQTPET) and 487 to 499 (VRTSSSGTAQRSL). Disordered stretches follow at residues 449–505 (QELS…PLHR) and 597–665 (VRRR…IEVS). Residue Ser-501 is modified to Phosphoserine. The segment covering 602–622 (KPSDRADSRRSWHEESPFEKQ) has biased composition (basic and acidic residues).

The protein belongs to the protein-tyrosine phosphatase family. Non-receptor class dual specificity subfamily. As to quaternary structure, interacts with ARRB2. Phosphorylated at Ser-446 by MAPK1/ERK2, which prevents its degradation, and thereby stabilizes it and blocks JNK MAPK activity. Post-translationally, (Microbial infection) Acetylated at Lys-55 by the M.tuberculosis Eis protein; this leads to the inhibition of JNK-dependent autophagy, phagosome maturation, and ROS (reactive oxygen species) generation for enhanced intracellular survival of M.tuberculosis.

The protein resides in the cytoplasm. Its subcellular location is the nucleus. The protein localises to the cytoplasmic vesicle. It catalyses the reaction O-phospho-L-tyrosyl-[protein] + H2O = L-tyrosyl-[protein] + phosphate. The catalysed reaction is O-phospho-L-seryl-[protein] + H2O = L-seryl-[protein] + phosphate. It carries out the reaction O-phospho-L-threonyl-[protein] + H2O = L-threonyl-[protein] + phosphate. Functionally, dual specificity protein phosphatase involved in the inactivation of MAP kinases. Dephosphorylates MAPK10 bound to ARRB2. This Homo sapiens (Human) protein is Dual specificity protein phosphatase 16 (DUSP16).